The primary structure comprises 121 residues: Large ribosomal subunit protein uL18 (121 aa).

The protein belongs to the universal ribosomal protein uL18 family. In terms of assembly, part of the 50S ribosomal subunit; part of the 5S rRNA/L5/L18/L25 subcomplex. Contacts the 5S and 23S rRNAs.

In terms of biological role, this is one of the proteins that bind and probably mediate the attachment of the 5S RNA into the large ribosomal subunit, where it forms part of the central protuberance. The polypeptide is Large ribosomal subunit protein uL18 (Burkholderia ambifaria (strain MC40-6)).